The following is a 274-amino-acid chain: NH(3)-dependent NAD(+) synthetase (274 aa).

46-53 contacts ATP; the sequence is GISGGQDS. D52 serves as a coordination point for Mg(2+). R140 provides a ligand contact to deamido-NAD(+). T160 serves as a coordination point for ATP. E165 provides a ligand contact to Mg(2+). Residues K173 and D180 each contribute to the deamido-NAD(+) site. Residues K189 and T211 each contribute to the ATP site. Residue 260 to 261 participates in deamido-NAD(+) binding; that stretch reads HK.

This sequence belongs to the NAD synthetase family. In terms of assembly, homodimer.

It carries out the reaction deamido-NAD(+) + NH4(+) + ATP = AMP + diphosphate + NAD(+) + H(+). It functions in the pathway cofactor biosynthesis; NAD(+) biosynthesis; NAD(+) from deamido-NAD(+) (ammonia route): step 1/1. Its function is as follows. Catalyzes the ATP-dependent amidation of deamido-NAD to form NAD. Uses ammonia as a nitrogen source. This chain is NH(3)-dependent NAD(+) synthetase, found in Streptococcus pyogenes serotype M6 (strain ATCC BAA-946 / MGAS10394).